A 687-amino-acid chain; its full sequence is Polyphosphate kinase (687 aa).

Asn45 is an ATP binding site. Residues Arg375 and Arg405 each contribute to the Mg(2+) site. Catalysis depends on His435, which acts as the Phosphohistidine intermediate. 3 residues coordinate ATP: Tyr472, Arg568, and His596.

It belongs to the polyphosphate kinase 1 (PPK1) family. Mg(2+) is required as a cofactor. An intermediate of this reaction is the autophosphorylated ppk in which a phosphate is covalently linked to a histidine residue through a N-P bond.

The enzyme catalyses [phosphate](n) + ATP = [phosphate](n+1) + ADP. Functionally, catalyzes the reversible transfer of the terminal phosphate of ATP to form a long-chain polyphosphate (polyP). The chain is Polyphosphate kinase from Paraburkholderia phytofirmans (strain DSM 17436 / LMG 22146 / PsJN) (Burkholderia phytofirmans).